The sequence spans 344 residues: Krueppel-like factor 3 (344 aa).

Residues methionine 1–alanine 74 are repressor domain. Lysine 10 is covalently cross-linked (Glycyl lysine isopeptide (Lys-Gly) (interchain with G-Cter in SUMO)). The 9aaTAD; inactive motif lies at glutamate 60–lysine 68. Residues proline 61–threonine 65 carry the CTBP-binding motif motif. Residues valine 66–proline 111 form a disordered region. Lysine 68 participates in a covalent cross-link: Glycyl lysine isopeptide (Lys-Gly) (interchain with G-Cter in SUMO2). Composition is skewed to low complexity over residues glycine 70–serine 81 and serine 91–serine 107. Phosphoserine occurs at positions 71, 91, 100, 107, and 110. Lysine 195 is covalently cross-linked (Glycyl lysine isopeptide (Lys-Gly) (interchain with G-Cter in SUMO2)). Residue lysine 197 forms a Glycyl lysine isopeptide (Lys-Gly) (interchain with G-Cter in SUMO); alternate linkage. Lysine 197 is covalently cross-linked (Glycyl lysine isopeptide (Lys-Gly) (interchain with G-Cter in SUMO2); alternate). Phosphoserine occurs at positions 215, 223, and 249. The segment at serine 235–arginine 254 is disordered. 3 C2H2-type zinc fingers span residues histidine 259–histidine 283, tyrosine 289–histidine 313, and phenylalanine 319–histidine 341.

Belongs to the krueppel C2H2-type zinc-finger protein family. As to quaternary structure, monomer. Post-translationally, sumoylated with SUMO1. Sumoylation is enhanced by PIAS1, PIAS2alpha and PIAS2beta, and PIAS4, but not by Pc2. Enhances transcriptional repression, but has no effect on DNA binding. Sumoylation on Lys-197 is the major site. In 8.5 day embryos, expressed in midbrain, anterior hindbrain and ventral forebrain. In 9 day embryos, expressed throughout ventral anterior half of embryo including midbrain-hindbrain junction, ventral midbrain, diencephalon and forebrain. At 10.5 days, distribution is more widespread with expression also found in developing limb buds. Widely expressed in the adult.

The protein resides in the nucleus. Functionally, binds to the CACCC box of erythroid cell-expressed genes. May play a role in hematopoiesis. This chain is Krueppel-like factor 3 (Klf3), found in Mus musculus (Mouse).